The chain runs to 199 residues: Ribonuclease HII (199 aa).

An RNase H type-2 domain is found at methionine 1–isoleucine 199. A divalent metal cation is bound by residues aspartate 7, glutamate 8, and aspartate 97.

It belongs to the RNase HII family. Mn(2+) serves as cofactor. Requires Mg(2+) as cofactor.

The protein localises to the cytoplasm. It catalyses the reaction Endonucleolytic cleavage to 5'-phosphomonoester.. Its function is as follows. Endonuclease that specifically degrades the RNA of RNA-DNA hybrids. This chain is Ribonuclease HII, found in Picrophilus torridus (strain ATCC 700027 / DSM 9790 / JCM 10055 / NBRC 100828 / KAW 2/3).